A 300-amino-acid chain; its full sequence is MKRVITLFAVLLMGWSVNAWSFACKTANGTAIPIGGGSANVYVNLAPVVNVGQNLVVDLSTQIFCHNDYPETITDYVTLQRGSAYGGVLSNFSGTVKYSGSSYPFPTTSETPRVVYNSRTDKPWPVALYLTPVSSAGGVAIKAGSLIAVLILRQTNNYNSDDFQFVWNIYANNDVVVPTGGCDVSARDVTVTLPDYPGSVPIPLTVYCAKSQNLGYYLSGTTADAGNSIFTNTASFSPAQGVGVQLTRNGTIIPANNTVSLGAVGTSAVSLGLTANYARTGGQVTAGNVQSIIGVTFVYQ.

The signal sequence occupies residues 1 to 21; it reads MKRVITLFAVLLMGWSVNAWS.

This sequence belongs to the fimbrial protein family.

The protein resides in the fimbrium. Its function is as follows. Involved in regulation of length and mediation of adhesion of type 1 fimbriae (but not necessary for the production of fimbriae). Adhesin responsible for the binding to D-mannose. It is laterally positioned at intervals in the structure of the type 1 fimbriae. In order to integrate FimH in the fimbriae FimF and FimG are needed. This is Type 1 fimbrin D-mannose specific adhesin (fimH) from Escherichia coli (strain K12).